The following is a 149-amino-acid chain: UPF0178 protein Pmen_0294 (149 aa).

This sequence belongs to the UPF0178 family.

This chain is UPF0178 protein Pmen_0294, found in Ectopseudomonas mendocina (strain ymp) (Pseudomonas mendocina).